The sequence spans 108 residues: MSILKKSTKLAQTAMLRQILKRCSSLGKKNGGGGYEEVDLPLDVPKGHFPVYVGHNRSRYIVPISFLTNLDFQCLLRRAEEEFGFDHDMGLTIPCDELFFQDLTSMIR.

The protein belongs to the ARG7 family. Expressed in seedlings, leaves and flowers.

The protein resides in the cell membrane. Provide a mechanistic link between auxin and plasma membrane H(+)-ATPases (PM H(+)-ATPases, e.g. AHA1 and AHA2), and triggers PM H(+)-ATPases activity by promoting phosphorylation of their C-terminal autoinhibitory domain as a result of PP2C-D subfamily of type 2C phosphatases inhibition, thus leading to the acidification of the apoplast and the facilitation of solutes and water uptake to drive cell expansion. Triggers plant growth probably by promoting cell elongation. Regulates branch angles and bending. This chain is Protein SMALL AUXIN UP-REGULATED RNA 8, found in Arabidopsis thaliana (Mouse-ear cress).